Reading from the N-terminus, the 147-residue chain is MNTIHLRCLFRMNPLVWCLRADVAAELRSLRRYYHLSNGMESKSVDTRSIYRELGATLSYNMRLGNGMEXEPWLKAAVRKEFVDDNRVKVNNDGNFVNDLSGRRGIYQAAIKASFSSTFSGHLGVGYSHGAGVESPWNAVAGVNWSF.

This is an uncharacterized protein from Escherichia coli (strain K12).